We begin with the raw amino-acid sequence, 555 residues long: Glutamine--tRNA ligase (555 aa).

A 'HIGH' region motif is present at residues 34–44 (PEPNGYLHIGH). ATP-binding positions include 35–37 (EPN) and 41–47 (HIGHAKS). 2 residues coordinate L-glutamine: Asp-67 and Tyr-212. ATP-binding positions include Thr-231, 261 to 262 (RL), and 269 to 271 (MSK). The 'KMSKS' region signature appears at 268–272 (VMSKR). An interaction with tRNA region spans residues 317-324 (TKQDNTIE).

The protein belongs to the class-I aminoacyl-tRNA synthetase family. In terms of assembly, monomer.

Its subcellular location is the cytoplasm. The catalysed reaction is tRNA(Gln) + L-glutamine + ATP = L-glutaminyl-tRNA(Gln) + AMP + diphosphate. The sequence is that of Glutamine--tRNA ligase from Salmonella newport (strain SL254).